A 481-amino-acid polypeptide reads, in one-letter code: Probable Xaa-Pro aminopeptidase PEPP (481 aa).

Residues D265, D276, E399, and E439 each coordinate Mn(2+).

Belongs to the peptidase M24B family. Mn(2+) is required as a cofactor.

It carries out the reaction Release of any N-terminal amino acid, including proline, that is linked to proline, even from a dipeptide or tripeptide.. Catalyzes the removal of a penultimate prolyl residue from the N-termini of peptides. This chain is Probable Xaa-Pro aminopeptidase PEPP (PEPP), found in Uncinocarpus reesii (strain UAMH 1704).